A 200-amino-acid chain; its full sequence is Lipopolysaccharide core heptose(II)-phosphate phosphatase (200 aa).

Positions 1 to 25 are cleaved as a signal peptide; that stretch reads MLAFCRSSLKSKKYFIILLALAAIA.

The protein belongs to the phosphoglycerate mutase family. Ais subfamily.

It localises to the periplasm. It participates in bacterial outer membrane biogenesis; lipopolysaccharide metabolism. Catalyzes the dephosphorylation of heptose(II) of the outer membrane lipopolysaccharide core. The chain is Lipopolysaccharide core heptose(II)-phosphate phosphatase from Escherichia coli O6:H1 (strain CFT073 / ATCC 700928 / UPEC).